The chain runs to 396 residues: Tryptophan synthase beta chain (396 aa).

Lysine 86 carries the N6-(pyridoxal phosphate)lysine modification.

Belongs to the TrpB family. In terms of assembly, tetramer of two alpha and two beta chains. Requires pyridoxal 5'-phosphate as cofactor.

The catalysed reaction is (1S,2R)-1-C-(indol-3-yl)glycerol 3-phosphate + L-serine = D-glyceraldehyde 3-phosphate + L-tryptophan + H2O. It participates in amino-acid biosynthesis; L-tryptophan biosynthesis; L-tryptophan from chorismate: step 5/5. In terms of biological role, the beta subunit is responsible for the synthesis of L-tryptophan from indole and L-serine. This is Tryptophan synthase beta chain from Pectobacterium carotovorum subsp. carotovorum (strain PC1).